The sequence spans 195 residues: Apoptosis-associated speck-like protein containing a CARD (195 aa).

Residues 1 to 91 (MGRARDAILD…AGQLQAATHQ (91 aa)) form the Pyrin domain. Glycyl lysine isopeptide (Lys-Gly) (interchain with G-Cter in ubiquitin) cross-links involve residues lysine 55 and lysine 174. In terms of domain architecture, CARD spans 107–195 (AAKPGLHFID…SYLVEDLERS (89 aa)). Serine 195 is subject to Phosphoserine.

Self-associates; enforced oligomerization induces apoptosis, NF-kappa-B regulation and interleukin-1 beta secretion. Homooligomers can form disk-like particles of approximately 12 nm diameter and approximately 1 nm height. Next to isoform 1, also isoform 2 and isoform 3 may be involved in oligomerization leading to functional regulation. Component of several inflammasomes containing one pattern recognition receptor/sensor, such as NLRP1, NLRP2, NLRP3, NLRP6, NLRC4, AIM2, MEFV or NOD2, and probably NLRC4, NLRP12 or IFI16. Major component of the ASC pyroptosome, a 1-2 um supramolecular assembly (one per macrophage cell) which consists of oligomerized PYCARD dimers and CASP1. Interacts with CASP1 (precursor form); the interaction induces activation of CASP1 leading to the processing of interleukin-1 beta; PYCARD competes with RIPK2 for binding to CASP1. Interacts with NLRP3; the interaction requires the homooligomerization of NLRP3. Interacts with NLRP2, NLRC4, MEFV, CARD16, AIM2, IFI16, NOD2, RIGI, RIPK2, PYDC1, PYDC2, NLRP10, CASP8, CHUK, IKBKB and BAX. Component of the AIM2 PANoptosome complex, a multiprotein complex that drives inflammatory cell death (PANoptosis). Phosphorylated. Post-translationally, 'Lys-63'-linked polyubiquitination by TRAF3 is critical for speck formation and inflammasome activation. 'Lys-63'-linked deubiquitinated by USP50; a crucial step for NLRP3-mediated inflammasome activation. 'Lys-63'-linked polyubiquitination by PELI1 is also critical for speck formation and inflammasome activation. Deubiquitinated by USP3 that cleaves 'Lys-48'-linked ubiquitin chains and strengthens its stability by blocking proteasomal degradation. In terms of tissue distribution, widely expressed at low levels. Detected in peripheral blood leukocytes, lung, small intestine, spleen, thymus, colon and at lower levels in placenta, liver and kidney. Very low expression in skeletal muscle, heart and brain. Expressed in lung epithelial cells (at protein level). Detected in the leukemia cell lines HL-60 and U-937, but not in Jurkat T-cell lymphoma and Daudi Burkitt's lymphoma. Detected in the melanoma cell line WM35, but not in WM793. Not detected in HeLa cervical carcinoma cells and MOLT-4 lymphocytic leukemia cells.

Its subcellular location is the cytoplasm. The protein localises to the inflammasome. The protein resides in the endoplasmic reticulum. It is found in the mitochondrion. It localises to the nucleus. Its subcellular location is the golgi apparatus membrane. Functions as a key mediator in apoptosis and inflammation. Promotes caspase-mediated apoptosis involving predominantly caspase-8 and also caspase-9 in a probable cell type-specific manner. Involved in activation of the mitochondrial apoptotic pathway, promotes caspase-8-dependent proteolytic maturation of BID independently of FADD in certain cell types and also mediates mitochondrial translocation of BAX and activates BAX-dependent apoptosis coupled to activation of caspase-9, -2 and -3. Involved in innate immune response by acting as an integral adapter in the assembly of various inflammasomes (NLRP1, NLRP2, NLRP3, NLRP6, AIM2 and probably IFI16) which recruit and activate caspase-1 leading to processing and secretion of pro-inflammatory cytokines. Caspase-1-dependent inflammation leads to macrophage pyroptosis, a form of cell death. The function as activating adapter in different types of inflammasomes is mediated by the pyrin and CARD domains and their homotypic interactions. Clustered PYCARD nucleates the formation of caspase-1 filaments through the interaction of their respective CARD domains, acting as a platform for of caspase-1 polymerization. In the NLRP1 and NLRC4 inflammasomes seems not be required but facilitates the processing of procaspase-1. In cooperation with NOD2 involved in an inflammasome activated by bacterial muramyl dipeptide leading to caspase-1 activation. May be involved in RIGI-triggered pro-inflammatory responses and inflammasome activation. In collaboration with AIM2 which detects cytosolic double-stranded DNA may also be involved in a caspase-1-independent cell death that involves caspase-8. In adaptive immunity may be involved in maturation of dendritic cells to stimulate T-cell immunity and in cytoskeletal rearrangements coupled to chemotaxis and antigen uptake may be involved in post-transcriptional regulation of the guanine nucleotide exchange factor DOCK2; the latter function is proposed to involve the nuclear form. Also involved in transcriptional activation of cytokines and chemokines independent of the inflammasome; this function may involve AP-1, NF-kappa-B, MAPK and caspase-8 signaling pathways. For regulation of NF-kappa-B activating and inhibiting functions have been reported. Modulates NF-kappa-B induction at the level of the IKK complex by inhibiting kinase activity of CHUK and IKBK. Proposed to compete with RIPK2 for association with CASP1 thereby down-regulating CASP1-mediated RIPK2-dependent NF-kappa-B activation and activating interleukin-1 beta processing. Modulates host resistance to DNA virus infection, probably by inducing the cleavage of and inactivating CGAS in presence of cytoplasmic double-stranded DNA. Its function is as follows. May have a regulating effect on the function as inflammasome adapter. In terms of biological role, seems to inhibit inflammasome-mediated maturation of interleukin-1 beta. In Homo sapiens (Human), this protein is Apoptosis-associated speck-like protein containing a CARD.